We begin with the raw amino-acid sequence, 258 residues long: Serine protease VLSP-3 (258 aa).

The first 18 residues, 1 to 18, serve as a signal peptide directing secretion; sequence MVLIRVLANLLVLQLSYA. The propeptide occupies 19 to 24; that stretch reads QKSSEL. The 225-residue stretch at 25–249 folds into the Peptidase S1 domain; that stretch reads VIGGDECNIN…YTDWIQSIIA (225 aa). Disulfide bonds link Cys31–Cys163, Cys50–Cys66, Cys98–Cys256, Cys142–Cys210, Cys174–Cys189, and Cys200–Cys225. Residue Asn44 is glycosylated (N-linked (GlcNAc...) asparagine). The Charge relay system role is filled by His65. Asn79 and Asn103 each carry an N-linked (GlcNAc...) asparagine glycan. The Charge relay system role is filled by Asp110. Asn154 and Asn170 each carry an N-linked (GlcNAc...) asparagine glycan. The active-site Charge relay system is the Ser204. Asn251 is a glycosylation site (N-linked (GlcNAc...) asparagine).

The protein belongs to the peptidase S1 family. Snake venom subfamily. In terms of assembly, monomer. Expressed by the venom gland.

Its subcellular location is the secreted. Functionally, snake venom serine protease that may act in the hemostasis system of the prey. This is Serine protease VLSP-3 from Macrovipera lebetinus (Levantine viper).